The primary structure comprises 346 residues: High mobility group protein 20A (346 aa).

2 stretches are compositionally biased toward polar residues: residues 1 to 10 (MESLMASSTL) and 55 to 65 (SQGQLLQSEAS). 2 disordered regions span residues 1–112 (MESL…YVRF) and 178–210 (FSRK…TEVK). Basic and acidic residues predominate over residues 71–81 (NEQRPEDEQRS). Over residues 82–95 (KRGGWSKGRKRKKP) the composition is skewed to basic residues. Residues 102–170 (PKSPLTGYVR…RYMKELEQYQ (69 aa)) constitute a DNA-binding region (HMG box). The residue at position 104 (Ser104) is a Phosphoserine. Basic and acidic residues predominate over residues 181–210 (KTQDRQKGKSHRQDAARQATHDHEKETEVK). A coiled-coil region spans residues 228-272 (SKAREAELRQLRKSNMEFEERNAALQKHVESMRTAVEKLEVDVIQ).

As to quaternary structure, interacts with DTNB. As to expression, expressed in brain. Detected in mature neurons.

The protein localises to the nucleus. Plays a role in neuronal differentiation as chromatin-associated protein. Acts as inhibitor of HMG20B. Overcomes the repressive effects of the neuronal silencer REST and induces the activation of neuronal-specific genes. Involved in the recruitment of the histone methyltransferase KMT2A/MLL1 and consequent increased methylation of histone H3 lysine 4. In Mus musculus (Mouse), this protein is High mobility group protein 20A (Hmg20a).